Consider the following 350-residue polypeptide: Heat-inducible transcription repressor HrcA (350 aa).

This sequence belongs to the HrcA family.

Its function is as follows. Negative regulator of class I heat shock genes (grpE-dnaK-dnaJ and groELS operons). Prevents heat-shock induction of these operons. The chain is Heat-inducible transcription repressor HrcA from Limosilactobacillus reuteri (strain DSM 20016) (Lactobacillus reuteri).